The following is a 276-amino-acid chain: Formamidopyrimidine-DNA glycosylase (276 aa).

Pro-2 serves as the catalytic Schiff-base intermediate with DNA. Catalysis depends on Glu-3, which acts as the Proton donor. Lys-58 acts as the Proton donor; for beta-elimination activity in catalysis. His-94, Arg-112, and Arg-157 together coordinate DNA. Residues 242-276 (FVYDRAGQPCRVCGTPIKQIVQGQRSTYYCPTCQR) form an FPG-type zinc finger. Catalysis depends on Arg-266, which acts as the Proton donor; for delta-elimination activity.

This sequence belongs to the FPG family. Monomer. Requires Zn(2+) as cofactor.

The enzyme catalyses Hydrolysis of DNA containing ring-opened 7-methylguanine residues, releasing 2,6-diamino-4-hydroxy-5-(N-methyl)formamidopyrimidine.. It carries out the reaction 2'-deoxyribonucleotide-(2'-deoxyribose 5'-phosphate)-2'-deoxyribonucleotide-DNA = a 3'-end 2'-deoxyribonucleotide-(2,3-dehydro-2,3-deoxyribose 5'-phosphate)-DNA + a 5'-end 5'-phospho-2'-deoxyribonucleoside-DNA + H(+). Functionally, involved in base excision repair of DNA damaged by oxidation or by mutagenic agents. Acts as a DNA glycosylase that recognizes and removes damaged bases. Has a preference for oxidized purines, such as 7,8-dihydro-8-oxoguanine (8-oxoG). Has AP (apurinic/apyrimidinic) lyase activity and introduces nicks in the DNA strand. Cleaves the DNA backbone by beta-delta elimination to generate a single-strand break at the site of the removed base with both 3'- and 5'-phosphates. The chain is Formamidopyrimidine-DNA glycosylase from Paraburkholderia phymatum (strain DSM 17167 / CIP 108236 / LMG 21445 / STM815) (Burkholderia phymatum).